A 485-amino-acid polypeptide reads, in one-letter code: UDP-N-acetylmuramoyl-L-alanyl-D-glutamate--2,6-diaminopimelate ligase (485 aa).

The UDP-N-acetyl-alpha-D-muramoyl-L-alanyl-D-glutamate site is built by Leu27 and Ser29. Position 106–112 (Gly106–Ser112) interacts with ATP. UDP-N-acetyl-alpha-D-muramoyl-L-alanyl-D-glutamate is bound by residues Thr148–Thr149, Ser175, Gln181, and Arg183. An N6-carboxylysine modification is found at Lys215. Meso-2,6-diaminopimelate contacts are provided by residues Arg382, Asp406–Arg409, Gly454, and Glu458. A Meso-diaminopimelate recognition motif motif is present at residues Asp406 to Arg409.

This sequence belongs to the MurCDEF family. MurE subfamily. Requires Mg(2+) as cofactor. Carboxylation is probably crucial for Mg(2+) binding and, consequently, for the gamma-phosphate positioning of ATP.

The protein localises to the cytoplasm. The enzyme catalyses UDP-N-acetyl-alpha-D-muramoyl-L-alanyl-D-glutamate + meso-2,6-diaminopimelate + ATP = UDP-N-acetyl-alpha-D-muramoyl-L-alanyl-gamma-D-glutamyl-meso-2,6-diaminopimelate + ADP + phosphate + H(+). It functions in the pathway cell wall biogenesis; peptidoglycan biosynthesis. Functionally, catalyzes the addition of meso-diaminopimelic acid to the nucleotide precursor UDP-N-acetylmuramoyl-L-alanyl-D-glutamate (UMAG) in the biosynthesis of bacterial cell-wall peptidoglycan. This chain is UDP-N-acetylmuramoyl-L-alanyl-D-glutamate--2,6-diaminopimelate ligase, found in Bradyrhizobium diazoefficiens (strain JCM 10833 / BCRC 13528 / IAM 13628 / NBRC 14792 / USDA 110).